A 393-amino-acid chain; its full sequence is Succinate--CoA ligase [ADP-forming] subunit beta (393 aa).

The 229-residue stretch at 9–237 (RDLFAKHGVP…KDAANPLEAA (229 aa)) folds into the ATP-grasp domain. ATP contacts are provided by residues Lys45, 52–54 (GRG), Glu92, Pro95, and Glu100. Asn192 and Asp206 together coordinate Mg(2+). Substrate-binding positions include Asn257 and 319–321 (GIT).

The protein belongs to the succinate/malate CoA ligase beta subunit family. In terms of assembly, heterotetramer of two alpha and two beta subunits. Mg(2+) is required as a cofactor.

It carries out the reaction succinate + ATP + CoA = succinyl-CoA + ADP + phosphate. It catalyses the reaction GTP + succinate + CoA = succinyl-CoA + GDP + phosphate. It functions in the pathway carbohydrate metabolism; tricarboxylic acid cycle; succinate from succinyl-CoA (ligase route): step 1/1. Functionally, succinyl-CoA synthetase functions in the citric acid cycle (TCA), coupling the hydrolysis of succinyl-CoA to the synthesis of either ATP or GTP and thus represents the only step of substrate-level phosphorylation in the TCA. The beta subunit provides nucleotide specificity of the enzyme and binds the substrate succinate, while the binding sites for coenzyme A and phosphate are found in the alpha subunit. In Streptomyces griseus subsp. griseus (strain JCM 4626 / CBS 651.72 / NBRC 13350 / KCC S-0626 / ISP 5235), this protein is Succinate--CoA ligase [ADP-forming] subunit beta.